The chain runs to 30 residues: Acyl-CoA-binding protein 1 (30 aa).

The segment covering 1 to 15 has biased composition (basic and acidic residues); it reads ALKDEFEEHAEKAKT. Residues 1-30 are disordered; it reads ALKDEFEEHAEKAKTLPENTSNENKLILYG. Residues 2-30 form the ACB domain; that stretch reads LKDEFEEHAEKAKTLPENTSNENKLILYG.

It belongs to the ACBP family.

It localises to the cytoplasm. Functionally, binds medium- and long-chain acyl-CoA esters with very high affinity and may function as an intracellular carrier of acyl-CoA esters. This chain is Acyl-CoA-binding protein 1, found in Digitalis lanata (Grecian foxglove).